A 107-amino-acid polypeptide reads, in one-letter code: Small ribosomal subunit protein uS10c (107 aa).

This sequence belongs to the universal ribosomal protein uS10 family. Part of the 30S ribosomal subunit.

It localises to the plastid. Its subcellular location is the chloroplast. Involved in the binding of tRNA to the ribosomes. This chain is Small ribosomal subunit protein uS10c, found in Phaeodactylum tricornutum (strain CCAP 1055/1).